Consider the following 87-residue polypeptide: RNA-binding protein Hfq (87 aa).

The region spanning 9-68 (DPYLNVLRKERIPVSIYLVNGIKLQGQVESFDQFVVLLKNTVSQMVYKHAISTVVPSRPV) is the Sm domain.

This sequence belongs to the Hfq family. Homohexamer.

Functionally, RNA chaperone that binds small regulatory RNA (sRNAs) and mRNAs to facilitate mRNA translational regulation in response to envelope stress, environmental stress and changes in metabolite concentrations. Also binds with high specificity to tRNAs. The sequence is that of RNA-binding protein Hfq from Teredinibacter turnerae (strain ATCC 39867 / T7901).